A 513-amino-acid chain; its full sequence is NAD(P)H-quinone oxidoreductase subunit 2 (513 aa).

The next 14 helical transmembrane spans lie at 12-32, 41-61, 77-97, 104-124, 130-150, 165-185, 199-219, 238-258, 272-292, 300-320, 328-348, 372-392, 394-414, and 456-476; these read TLWP…VDLI, LPYL…PMWI, LSVV…LMSV, SLAT…AMLL, MAMI…LSGY, LLIG…LYGF, IVNL…GICF, PTPV…ALAI, WQTL…VVAI, MLAY…AIGT, ILYI…VVLF, LVLS…GFFG, LYLF…FGLV, and AGML…PPLI. The span at 494-505 shows a compositional bias: polar residues; the sequence is TATPVSRVSTGA. The disordered stretch occupies residues 494 to 513; sequence TATPVSRVSTGAQAPADHGR.

Belongs to the complex I subunit 2 family. In terms of assembly, NDH-1 can be composed of about 15 different subunits; different subcomplexes with different compositions have been identified which probably have different functions.

It localises to the cell inner membrane. It catalyses the reaction a plastoquinone + NADH + (n+1) H(+)(in) = a plastoquinol + NAD(+) + n H(+)(out). The enzyme catalyses a plastoquinone + NADPH + (n+1) H(+)(in) = a plastoquinol + NADP(+) + n H(+)(out). Functionally, NDH-1 shuttles electrons from an unknown electron donor, via FMN and iron-sulfur (Fe-S) centers, to quinones in the respiratory and/or the photosynthetic chain. The immediate electron acceptor for the enzyme in this species is believed to be plastoquinone. Couples the redox reaction to proton translocation, and thus conserves the redox energy in a proton gradient. Cyanobacterial NDH-1 also plays a role in inorganic carbon-concentration. The polypeptide is NAD(P)H-quinone oxidoreductase subunit 2 (Gloeobacter violaceus (strain ATCC 29082 / PCC 7421)).